Reading from the N-terminus, the 227-residue chain is Octanoyltransferase (227 aa).

In terms of domain architecture, BPL/LPL catalytic spans 47-223 (EDTADEIWLL…HLLRLLPPGV (177 aa)). Substrate is bound by residues 87 to 94 (RGGQITYH), 154 to 156 (ALG), and 167 to 169 (GLA). The active-site Acyl-thioester intermediate is Cys185.

The protein belongs to the LipB family.

Its subcellular location is the cytoplasm. It catalyses the reaction octanoyl-[ACP] + L-lysyl-[protein] = N(6)-octanoyl-L-lysyl-[protein] + holo-[ACP] + H(+). It functions in the pathway protein modification; protein lipoylation via endogenous pathway; protein N(6)-(lipoyl)lysine from octanoyl-[acyl-carrier-protein]: step 1/2. Catalyzes the transfer of endogenously produced octanoic acid from octanoyl-acyl-carrier-protein onto the lipoyl domains of lipoate-dependent enzymes. Lipoyl-ACP can also act as a substrate although octanoyl-ACP is likely to be the physiological substrate. This Azoarcus sp. (strain BH72) protein is Octanoyltransferase.